The sequence spans 87 residues: Small ribosomal subunit protein bS20 (87 aa).

The segment at 1 to 27 is disordered; sequence MANIKSAKKRAIQSEKRRQHNASRRSM.

The protein belongs to the bacterial ribosomal protein bS20 family.

Its function is as follows. Binds directly to 16S ribosomal RNA. This Aeromonas salmonicida (strain A449) protein is Small ribosomal subunit protein bS20.